Consider the following 164-residue polypeptide: UPF0303 protein RHE_CH02903 (164 aa).

This sequence belongs to the UPF0303 family.

This chain is UPF0303 protein RHE_CH02903, found in Rhizobium etli (strain ATCC 51251 / DSM 11541 / JCM 21823 / NBRC 15573 / CFN 42).